Reading from the N-terminus, the 242-residue chain is B-box zinc finger protein 20 (242 aa).

Residues Cys5, Cys8, Cys28, His33, Cys58, Cys61, Cys81, and His91 each contribute to the Zn(2+) site. A B box-type 1; atypical zinc finger spans residues 5–47 (CAVCDKEEASVFCCADEAALCNGCDRHVHFANKLAGKHLRFSL). The B box-type 2; atypical zinc-finger motif lies at 58 to 100 (CDICGERRALLFCQEDRAILCRECDIPIHQANEHTKKHNRFLL). The interval 112-153 (YPRASNSNSAAAFGRAKTRPKSVSSEVPSSASNEVFTSSSST) is disordered. The segment covering 133-153 (SVSSEVPSSASNEVFTSSSST) has biased composition (low complexity).

As to quaternary structure, interacts with MED25 and COP1. Post-translationally, COP1-mediated ubiquitination and subsequent proteasomal degradation of BBX20 occurs in the dark.

The protein localises to the nucleus. Its function is as follows. Acts as a positive regulator of seedling photomorphogenesis. Plays a negative role in brassinosteroid responses. The polypeptide is B-box zinc finger protein 20 (Arabidopsis thaliana (Mouse-ear cress)).